The primary structure comprises 38 residues: Photosystem II reaction center protein L (38 aa).

A helical membrane pass occupies residues 17 to 37 (SLYWGLLLIFVLAILFSSYIF).

Belongs to the PsbL family. As to quaternary structure, PSII is composed of 1 copy each of membrane proteins PsbA, PsbB, PsbC, PsbD, PsbE, PsbF, PsbH, PsbI, PsbJ, PsbK, PsbL, PsbM, PsbT, PsbX, PsbY, PsbZ, Psb30/Ycf12, at least 3 peripheral proteins of the oxygen-evolving complex and a large number of cofactors. It forms dimeric complexes.

Its subcellular location is the plastid. The protein resides in the chloroplast thylakoid membrane. In terms of biological role, one of the components of the core complex of photosystem II (PSII). PSII is a light-driven water:plastoquinone oxidoreductase that uses light energy to abstract electrons from H(2)O, generating O(2) and a proton gradient subsequently used for ATP formation. It consists of a core antenna complex that captures photons, and an electron transfer chain that converts photonic excitation into a charge separation. This subunit is found at the monomer-monomer interface and is required for correct PSII assembly and/or dimerization. The protein is Photosystem II reaction center protein L of Mesostigma viride (Green alga).